We begin with the raw amino-acid sequence, 68 residues long: Glucagon-1 (68 aa).

This sequence belongs to the glucagon family.

It localises to the secreted. Promotes hydrolysis of glycogen and lipids, and raises the blood sugar level. This chain is Glucagon-1 (gcg), found in Oncorhynchus kisutch (Coho salmon).